The primary structure comprises 546 residues: MSTPSSRSQAPETVTTGPIQGSEKIYQELPNGLRVPQRRVNLTNGEYLDLYDTSGPYTDTNAVIDLHKGLPPRAGIVTDRGTQLQRARAGEITAEMEFIAVREGVPAELVRTEVAAGRAVIPANHKHPESEPMIIGKAFGVKINANIGNSAVTSSIAEEVEKMVWAIRWGADNIMDLSTGKDIHQTREWILRNSPVPVGTVPIYQALEKTNGDPAALTWELYRDTVIEQAEQGVDYMTVHAGVLLRYVPLTAKRVTGIVSRGGSIMAAWCLAHHRESFLYTHFEELCEILARYDVTFSLGDGLRPGSIADANDEAQFAELRTLGELTKIAKSHGVQVMIEGPGHVPMHKIVENVKLEEELCEEAPFYTLGPLATDIAPAYDHITSAIGAAIIAQAGTAMLCYVTPKEHLGLPDRKDVKDGVIAYKIAAHSADLAKGHPRAQLRDNALSKARFEFRWEDQFNLSLDPDTAREFHDETLPAEPAKTAHFCSMCGPKFCSMRITADIREFAAENGLETQEDIDAMLARGMEEKSAEFAEHGNRVYLPIA.

Over residues 1–19 (MSTPSSRSQAPETVTTGPI) the composition is skewed to polar residues. The interval 1-20 (MSTPSSRSQAPETVTTGPIQ) is disordered. Substrate-binding positions include Asn-146, Met-175, Tyr-204, His-240, 260–262 (SRG), 301–304 (DGLR), and Glu-340. His-344 contributes to the Zn(2+) binding site. A substrate-binding site is contributed by Tyr-367. His-408 is a binding site for Zn(2+). Positions 488, 491, and 496 each coordinate [4Fe-4S] cluster.

The protein belongs to the ThiC family. The cofactor is [4Fe-4S] cluster.

It carries out the reaction 5-amino-1-(5-phospho-beta-D-ribosyl)imidazole + S-adenosyl-L-methionine = 4-amino-2-methyl-5-(phosphooxymethyl)pyrimidine + CO + 5'-deoxyadenosine + formate + L-methionine + 3 H(+). The protein operates within cofactor biosynthesis; thiamine diphosphate biosynthesis. Catalyzes the synthesis of the hydroxymethylpyrimidine phosphate (HMP-P) moiety of thiamine from aminoimidazole ribotide (AIR) in a radical S-adenosyl-L-methionine (SAM)-dependent reaction. The chain is Phosphomethylpyrimidine synthase from Mycobacteroides abscessus (strain ATCC 19977 / DSM 44196 / CCUG 20993 / CIP 104536 / JCM 13569 / NCTC 13031 / TMC 1543 / L948) (Mycobacterium abscessus).